A 738-amino-acid polypeptide reads, in one-letter code: MEPLFPKRLLSIAVLCVASATAQADTGMNPDNDYWWPNRLSLEPLRDSSLSADPRGANFDYNEALKDLDVEALKKDLKQVMTASQDWWPADYGHYGPFFIRLSWHAAGTYRMIDGRGGADGGMQRFAPLNSWPDNASLDKARRLLQPIKQKYGNNLSWSDLLVLAGTIGMEDMGFPIVGFAFGRDDEWEPEEVNWGPEGQWLTDRRHSGDRKLDKPFGATEMGLIYVNPEGPHGNPDPIAAAHDIRQAFGRMGMSDEETVALIAGGHTFGKAHGAHKPSDCVGADPEAASMEEQGLGWTNKCGKGNAEDTVTSGLEGAWTVSPAEWTHNFLQNLYAFEWELTTSPAGAKQWVPKGGAATNMVPDAHDSSKRHAPIMLTTDLALKEDPAYRKITQRWLEDPEEFTRAFARAWFKLTHRDMGPVSRYKGELVPSDTFVWQDPVPVADYKQIGERDVKKLKAAILDSGLSTSDLVKTAWASAASFRTTDMRGGANGARIRLAPQKDWAVNQPQDLQRVLKVLEGVQREFNKKSRKTKVSLADVIVLGGAAAIEQAAKKAGHKVEVPFFPGRTDASQEMTDVSTFAWLEPKSDGFRNFHAEGYKRNPAEALVERAALLGLTAPEMTALVGGLRVLQANADGSQHGVFTDNPGSLTNDFFVNLVDMSTVWKKSDTEAGLYKGLDRNSGKVKWTATSADLIFGSNSELRAIAEYYSQSDSQKTFVQDFINAWSKVMTADRFDLK.

An N-terminal signal peptide occupies residues 1 to 24; it reads MEPLFPKRLLSIAVLCVASATAQA. Positions 104-226 form a cross-link, tryptophyl-tyrosyl-methioninium (Trp-Tyr) (with M-252); it reads WHAAGTYRMI…FGATEMGLIY (123 aa). His-105 acts as the Proton acceptor in catalysis. The segment at 191–213 is disordered; that stretch reads EEVNWGPEGQWLTDRRHSGDRKL. The segment covering 203–213 has biased composition (basic and acidic residues); the sequence is TDRRHSGDRKL. The segment at residues 226–252 is a cross-link (tryptophyl-tyrosyl-methioninium (Tyr-Met) (with W-104)); it reads YVNPEGPHGNPDPIAAAHDIRQAFGRM. His-267 contacts heme b.

The protein belongs to the peroxidase family. Peroxidase/catalase subfamily. Homodimer or homotetramer. Heme b is required as a cofactor. Formation of the three residue Trp-Tyr-Met cross-link is important for the catalase, but not the peroxidase activity of the enzyme.

It catalyses the reaction H2O2 + AH2 = A + 2 H2O. The enzyme catalyses 2 H2O2 = O2 + 2 H2O. Bifunctional enzyme with both catalase and broad-spectrum peroxidase activity. The sequence is that of Catalase-peroxidase from Saccharophagus degradans (strain 2-40 / ATCC 43961 / DSM 17024).